We begin with the raw amino-acid sequence, 82 residues long: Large ribosomal subunit protein bL27 (82 aa).

Positions 1–26 (MAHKKGQGASRNGRDSESKRLGMKVG) are disordered.

It belongs to the bacterial ribosomal protein bL27 family.

The polypeptide is Large ribosomal subunit protein bL27 (Chlamydia felis (strain Fe/C-56) (Chlamydophila felis)).